The sequence spans 1134 residues: RNA-binding protein NAB6 (1134 aa).

S2 carries the N-acetylserine modification. Disordered regions lie at residues 112–133 (RPVS…NTNN), 151–173 (RNNN…RNNS), and 464–491 (SVPS…SGIT). 2 stretches are compositionally biased toward low complexity: residues 115 to 133 (SNHN…NTNN) and 151 to 164 (RNNN…HNNN). A phosphoserine mark is found at S464 and S467. Residues 471–489 (GNNNDSNNNGNNNKSNMSG) are compositionally biased toward low complexity. The RRM domain maps to 653–726 (RTIYIGNINP…NMLRVGWGHY (74 aa)). Disordered stretches follow at residues 918–959 (LDAH…FGGL) and 1043–1092 (NYRS…GSFA). The span at 1057-1081 (STLSYNHSKNNETPMQDIFTNGETA) shows a compositional bias: polar residues. A compositionally biased stretch (basic residues) spans 1083–1092 (NRKKKRGSFA).

It is found in the cytoplasm. Its function is as follows. RNA-binding protein that associates with mRNAs encoding cell wall proteins. The polypeptide is RNA-binding protein NAB6 (NAB6) (Saccharomyces cerevisiae (strain ATCC 204508 / S288c) (Baker's yeast)).